The following is a 988-amino-acid chain: Isoleucine--tRNA ligase (988 aa).

Residues 60–70 carry the 'HIGH' region motif; that stretch reads PYANGALHMGH. Glu-570 serves as a coordination point for L-isoleucyl-5'-AMP. The 'KMSKS' region signature appears at 611–615; the sequence is KMSKS. Lys-614 is an ATP binding site. Residues Cys-957, Cys-960, Cys-977, and Cys-980 each contribute to the Zn(2+) site.

It belongs to the class-I aminoacyl-tRNA synthetase family. IleS type 1 subfamily. In terms of assembly, monomer. Requires Zn(2+) as cofactor.

The protein localises to the cytoplasm. It carries out the reaction tRNA(Ile) + L-isoleucine + ATP = L-isoleucyl-tRNA(Ile) + AMP + diphosphate. Its function is as follows. Catalyzes the attachment of isoleucine to tRNA(Ile). As IleRS can inadvertently accommodate and process structurally similar amino acids such as valine, to avoid such errors it has two additional distinct tRNA(Ile)-dependent editing activities. One activity is designated as 'pretransfer' editing and involves the hydrolysis of activated Val-AMP. The other activity is designated 'posttransfer' editing and involves deacylation of mischarged Val-tRNA(Ile). This is Isoleucine--tRNA ligase from Synechocystis sp. (strain ATCC 27184 / PCC 6803 / Kazusa).